The chain runs to 280 residues: Large ribosomal subunit protein uL2 (280 aa).

Disordered stretches follow at residues M1–G47 and V224–R280. Positions E23–L33 are enriched in basic and acidic residues. Over residues L37 to G47 the composition is skewed to basic residues. Residues R258–I268 show a composition bias toward polar residues. Basic residues predominate over residues Q270 to R280.

This sequence belongs to the universal ribosomal protein uL2 family. Part of the 50S ribosomal subunit. Forms a bridge to the 30S subunit in the 70S ribosome.

Functionally, one of the primary rRNA binding proteins. Required for association of the 30S and 50S subunits to form the 70S ribosome, for tRNA binding and peptide bond formation. It has been suggested to have peptidyltransferase activity; this is somewhat controversial. Makes several contacts with the 16S rRNA in the 70S ribosome. The chain is Large ribosomal subunit protein uL2 from Corynebacterium diphtheriae (strain ATCC 700971 / NCTC 13129 / Biotype gravis).